The primary structure comprises 443 residues: ATP-dependent protease ATPase subunit HslU (443 aa).

ATP contacts are provided by residues Ile18, 60–65, Asp256, Glu321, and Arg393; that span reads GVGKTE.

This sequence belongs to the ClpX chaperone family. HslU subfamily. A double ring-shaped homohexamer of HslV is capped on each side by a ring-shaped HslU homohexamer. The assembly of the HslU/HslV complex is dependent on binding of ATP.

Its subcellular location is the cytoplasm. ATPase subunit of a proteasome-like degradation complex; this subunit has chaperone activity. The binding of ATP and its subsequent hydrolysis by HslU are essential for unfolding of protein substrates subsequently hydrolyzed by HslV. HslU recognizes the N-terminal part of its protein substrates and unfolds these before they are guided to HslV for hydrolysis. The protein is ATP-dependent protease ATPase subunit HslU of Salmonella arizonae (strain ATCC BAA-731 / CDC346-86 / RSK2980).